Consider the following 944-residue polypeptide: Nonsense-mediated mRNA decay factor SMG8 (944 aa).

Disordered stretches follow at residues 560–597 and 628–653; these read NTGK…QNTA and QASS…DTEN. A compositionally biased stretch (acidic residues) spans 568 to 583; that stretch reads QDEDAGEDEAEEEEGQ. A compositionally biased stretch (polar residues) spans 628 to 650; sequence QASSEQLSNSEQNTTSSGTSSAD.

The protein belongs to the SMG8 family.

In terms of biological role, involved in nonsense-mediated decay (NMD) of mRNAs containing premature stop codons. Probable component of kinase complex containing nonC and recruited to stalled ribosomes. This Drosophila simulans (Fruit fly) protein is Nonsense-mediated mRNA decay factor SMG8.